We begin with the raw amino-acid sequence, 324 residues long: Elongation factor P--(R)-beta-lysine ligase (324 aa).

75–77 (SPE) serves as a coordination point for substrate. ATP is bound by residues 99 to 101 (RNK) and Asn108. Residue Tyr117 coordinates substrate. 243 to 244 (EL) lines the ATP pocket. Glu250 is a substrate binding site. Gly299 contributes to the ATP binding site.

This sequence belongs to the class-II aminoacyl-tRNA synthetase family. EpmA subfamily. In terms of assembly, homodimer.

It carries out the reaction D-beta-lysine + L-lysyl-[protein] + ATP = N(6)-((3R)-3,6-diaminohexanoyl)-L-lysyl-[protein] + AMP + diphosphate + H(+). With EpmB is involved in the beta-lysylation step of the post-translational modification of translation elongation factor P (EF-P). Catalyzes the ATP-dependent activation of (R)-beta-lysine produced by EpmB, forming a lysyl-adenylate, from which the beta-lysyl moiety is then transferred to the epsilon-amino group of a conserved specific lysine residue in EF-P. This Buchnera aphidicola subsp. Acyrthosiphon pisum (strain APS) (Acyrthosiphon pisum symbiotic bacterium) protein is Elongation factor P--(R)-beta-lysine ligase.